A 378-amino-acid chain; its full sequence is MQRLEFSESERSTVGIEWELALVDGATGDLVPIAKEVLGELGTSDGREHPQITHELLMNTVEVVSQVHRTVPAAIADLQELIGMVREVTDPRGVELMCAETHPFAQWYDQRITPSERYDRLLDRTQWWGRQMMIWGVHVHIGIDERDKALPIVNGLLTYYPHLQALSASSPFWAGANTGYASNRALMFQQLPTAGLPWQFGAWANYEEYVQDLVTTGVVTDHSEVRWDIRPSPKWGTVEMRACDGLSTADEVGAVAALIHCLTDQMLGELDDGVKPVTLQPWFVRENKWRAARYGLDAEVIVAPDGAERLVRDELAELTETLAPIAERLGCAEQLAQVHTILRTGASYQRQLAVAEANGGSLQEVVSSLTNELRNGLG.

Belongs to the glutamate--cysteine ligase type 2 family. YbdK subfamily.

It carries out the reaction L-cysteine + L-glutamate + ATP = gamma-L-glutamyl-L-cysteine + ADP + phosphate + H(+). ATP-dependent carboxylate-amine ligase which exhibits weak glutamate--cysteine ligase activity. This Leifsonia xyli subsp. xyli (strain CTCB07) protein is Putative glutamate--cysteine ligase 2.